The sequence spans 128 residues: Large ribosomal subunit protein bL12 (128 aa).

Belongs to the bacterial ribosomal protein bL12 family. As to quaternary structure, homodimer. Part of the ribosomal stalk of the 50S ribosomal subunit. Forms a multimeric L10(L12)X complex, where L10 forms an elongated spine to which 2 to 4 L12 dimers bind in a sequential fashion. Binds GTP-bound translation factors.

In terms of biological role, forms part of the ribosomal stalk which helps the ribosome interact with GTP-bound translation factors. Is thus essential for accurate translation. The chain is Large ribosomal subunit protein bL12 from Halorhodospira halophila (strain DSM 244 / SL1) (Ectothiorhodospira halophila (strain DSM 244 / SL1)).